The following is a 221-amino-acid chain: uncharacterized protein (221 aa).

An N-terminal signal peptide occupies residues 1–26 (MVRLVPRAFAATVALLAAGFSPATAS).

This is an uncharacterized protein from Mycobacterium tuberculosis (strain ATCC 25618 / H37Rv).